A 548-amino-acid chain; its full sequence is mRNA cleavage and polyadenylation factor CLP1 (548 aa).

ATP is bound by residues glutamate 19, lysine 60, and 123–128 (SSGKTT). Over residues 437–478 (ESEVKEEVKEEKNEKDGEIKQDGEGEKKGEGKGEGEGEGEGK) the composition is skewed to basic and acidic residues. Residues 437 to 500 (ESEVKEEVKE…DEEEVPFREE (64 aa)) form a disordered region. Positions 479–494 (DGEEEGEAEGEDDEEE) are enriched in acidic residues.

This sequence belongs to the Clp1 family. Clp1 subfamily. In terms of assembly, component of a pre-mRNA cleavage factor complex. Interacts directly with PCF11.

Its subcellular location is the nucleus. Its function is as follows. Required for endonucleolytic cleavage during polyadenylation-dependent pre-mRNA 3'-end formation. The polypeptide is mRNA cleavage and polyadenylation factor CLP1 (Cryptococcus neoformans var. neoformans serotype D (strain JEC21 / ATCC MYA-565) (Filobasidiella neoformans)).